The primary structure comprises 134 residues: Profilin-2 (134 aa).

A disulfide bridge connects residues Cys-13 and Cys-118. The Involved in PIP2 interaction signature appears at 84–100 (AVIRGKKGSGGITIKKT). The residue at position 114 (Thr-114) is a Phosphothreonine.

It belongs to the profilin family. In terms of assembly, occurs in many kinds of cells as a complex with monomeric actin in a 1:1 ratio. Phosphorylated by MAP kinases.

The protein localises to the cytoplasm. It is found in the cytoskeleton. In terms of biological role, binds to actin and affects the structure of the cytoskeleton. At high concentrations, profilin prevents the polymerization of actin, whereas it enhances it at low concentrations. This Olea europaea (Common olive) protein is Profilin-2.